We begin with the raw amino-acid sequence, 92 residues long: DNA-directed RNA polymerase subunit Rpo11 (92 aa).

It belongs to the archaeal Rpo11/eukaryotic RPB11/RPC19 RNA polymerase subunit family. As to quaternary structure, part of the RNA polymerase complex.

The protein resides in the cytoplasm. The enzyme catalyses RNA(n) + a ribonucleoside 5'-triphosphate = RNA(n+1) + diphosphate. Its function is as follows. DNA-dependent RNA polymerase (RNAP) catalyzes the transcription of DNA into RNA using the four ribonucleoside triphosphates as substrates. The protein is DNA-directed RNA polymerase subunit Rpo11 of Halorubrum lacusprofundi (strain ATCC 49239 / DSM 5036 / JCM 8891 / ACAM 34).